The sequence spans 110 residues: Iron-sulfur cluster assembly protein CyaY (110 aa).

Belongs to the frataxin family.

Its function is as follows. Involved in iron-sulfur (Fe-S) cluster assembly. May act as a regulator of Fe-S biogenesis. This is Iron-sulfur cluster assembly protein CyaY from Pseudomonas fluorescens (strain SBW25).